The sequence spans 252 residues: Phosphoglycolate phosphatase (252 aa).

Asp-13 serves as the catalytic Nucleophile. Asp-13, Asp-15, and Asp-192 together coordinate Mg(2+).

This sequence belongs to the HAD-like hydrolase superfamily. CbbY/CbbZ/Gph/YieH family. As to quaternary structure, monomer. Mg(2+) is required as a cofactor. Chloride serves as cofactor.

It carries out the reaction 2-phosphoglycolate + H2O = glycolate + phosphate. The protein operates within organic acid metabolism; glycolate biosynthesis; glycolate from 2-phosphoglycolate: step 1/1. Functionally, specifically catalyzes the dephosphorylation of 2-phosphoglycolate. Is involved in the dissimilation of the intracellular 2-phosphoglycolate formed during the DNA repair of 3'-phosphoglycolate ends, a major class of DNA lesions induced by oxidative stress. This Escherichia coli O157:H7 protein is Phosphoglycolate phosphatase.